The primary structure comprises 351 residues: MAAISGISSGTLTISRPLVTLRRSRAAVSYSSSHRLLHHLPLSSRRLLLRNNHRVQATILQDDEEKVVVEESFKAETSTGTEPLEEPNMSSSSTSAFETWIIKLEQGVNVFLTDSVIKILDTLYRDRTYARFFVLETIARVPYFAFMSVLHMYETFGWWRRADYLKVHFAESWNEMHHLLIMEELGGNSWWFDRFLAQHIATFYYFMTVFLYILSPRMAYHFSECVESHAYETYDKFLKASGEELKNMPAPDIAVKYYTGGDLYLFDEFQTSRTPNTRRPVIENLYDVFVNIRDDEAEHCKTMRACQTLGSLRSPHSILEDDDTEEESGCVVPEEAHCEGIVDCLKKSITS.

The N-terminal 56 residues, 1–56 (MAAISGISSGTLTISRPLVTLRRSRAAVSYSSSHRLLHHLPLSSRRLLLRNNHRVQ), are a transit peptide targeting the chloroplast and chromoplast. Positions 71–91 (ESFKAETSTGTEPLEEPNMSS) are disordered. The helical transmembrane segment at 132-152 (FFVLETIARVPYFAFMSVLHM) threads the bilayer. Glu-136, Glu-175, and His-178 together coordinate Fe cation. The chain crosses the membrane as a helical span at residues 195–215 (FLAQHIATFYYFMTVFLYILS). Fe cation contacts are provided by Glu-227, Glu-296, and His-299.

Belongs to the alternative oxidase family. It depends on Fe cation as a cofactor. Ubiquitous.

Its subcellular location is the plastid. It is found in the chloroplast thylakoid membrane. The protein resides in the chromoplast membrane. It catalyses the reaction 2 a ubiquinol + O2 = 2 a ubiquinone + 2 H2O. Acts early in chloroplast biogenesis as a component of a redox chain responsible for phytoene desaturation. Prevents the generation of toxic oxygen radicals and photooxidation of the nascent photosynthetic apparatus. Involved in the differentiation of multiple plastid types, including chloroplasts, amyloplasts, and etioplasts. Might participate in the chloroplast respiratory chain. The sequence is that of Ubiquinol oxidase 4, chloroplastic/chromoplastic (AOX4) from Arabidopsis thaliana (Mouse-ear cress).